The following is a 65-amino-acid chain: Small ribosomal subunit protein bS21 (65 aa).

The interval 44-65 (DDRLKRSRGKRRAQRANEERNS) is disordered. A compositionally biased stretch (basic residues) spans 48–57 (KRSRGKRRAQ).

This sequence belongs to the bacterial ribosomal protein bS21 family.

This Prosthecochloris aestuarii (strain DSM 271 / SK 413) protein is Small ribosomal subunit protein bS21.